The following is a 328-amino-acid chain: MLNEFPIFDYEDIQLIPNKCVIKSRAEADTSVTLGNHTFKLPVVPANMQTILDENVAEQLAKGGYFYIMHRFDEAGRIPFIKRMHDQGLIASISVGVKDYEYDFVRQLKTDAPEYITIDIAHGHADSVISMIQHIKKELPDTFVIAGNVGTPEAVRELENAGADATKVGIGPGKVCITKVKTGFGTGGWQLAALRWCAKAARKPIIADGGIRTHGDIAKSIRFGASMVMIGSLFAGHIESPGKTIEVDGEQFKEYYGSASQYQKGAYKNVEGKRILLPAKGHLQDTLTEMEQDLQSAISYAGGRQVADLKHVDYVIVKNSIWNGDASH.

Cysteine 176 acts as the Thioimidate intermediate in catalysis. 205–228 is a binding site for NADP(+); that stretch reads IIADGGIRTHGDIAKSIRFGASMV.

It belongs to the IMPDH/GMPR family. GuaC type 2 subfamily.

It catalyses the reaction IMP + NH4(+) + NADP(+) = GMP + NADPH + 2 H(+). Catalyzes the irreversible NADPH-dependent deamination of GMP to IMP. It functions in the conversion of nucleobase, nucleoside and nucleotide derivatives of G to A nucleotides, and in maintaining the intracellular balance of A and G nucleotides. The chain is GMP reductase from Streptococcus pneumoniae (strain Hungary19A-6).